We begin with the raw amino-acid sequence, 166 residues long: Urease accessory protein UreE (166 aa).

The tract at residues 135-156 (EQGAYGGGHHHSHHGDEEFNYG) is disordered.

The protein belongs to the UreE family.

Its subcellular location is the cytoplasm. Involved in urease metallocenter assembly. Binds nickel. Probably functions as a nickel donor during metallocenter assembly. This is Urease accessory protein UreE from Ectopseudomonas mendocina (strain ymp) (Pseudomonas mendocina).